The chain runs to 82 residues: Progonadoliberin-3 (82 aa).

The signal sequence occupies residues 1-23 (MDLSSKTVVQVVMLALIAQVTFS). Residue Q24 is modified to Pyrrolidone carboxylic acid. Residue G33 is modified to Glycine amide.

This sequence belongs to the GnRH family.

The protein localises to the secreted. In terms of biological role, stimulates the secretion of gonadotropins. The protein is Progonadoliberin-3 (gnrh3) of Oncorhynchus masou (Cherry salmon).